A 213-amino-acid polypeptide reads, in one-letter code: Bcl-2-related ovarian killer protein (213 aa).

Residues 32–44 carry the BH4 motif; that stretch reads KALCRDYINSRLI. The short motif at 67-83 is the BH3 element; that stretch reads VSAILLRLGDELEYIRP. A BH1 motif is present at residues 113–132; it reads QIFTAGITWGKVVSLYAVAA. A BH2 motif is present at residues 165–179; it reads WLKRRGGWADITKCV. Residues 190 to 210 form a helical membrane-spanning segment; it reads WLVAAVCSFGHFLKAIFFVLL.

The protein belongs to the Bcl-2 family.

The protein localises to the membrane. In terms of biological role, may play a role in apoptosis. The protein is Bcl-2-related ovarian killer protein of Gallus gallus (Chicken).